A 363-amino-acid polypeptide reads, in one-letter code: Protein TAX-1 (363 aa).

A required for localization to the flagellum and for flagellar motility region spans residues 129 to 363 (RYGNAEEILS…IPFRGVAAEQ (235 aa)). 2 TPR repeats span residues 157-190 (AELHQTFGLLYAADNKLDVSVKHLTCATYYLSVM) and 199-232 (TFAYFDLANVFATKACMEAAMALYDTVKNIWLKH).

As to quaternary structure, interacts with TTC29.

The protein localises to the cytoplasm. It localises to the cytoskeleton. It is found in the flagellum axoneme. In terms of biological role, required for flagellum motility. The sequence is that of Protein TAX-1 from Trypanosoma brucei brucei (strain 927/4 GUTat10.1).